The following is a 325-amino-acid chain: Tetraacyldisaccharide 4'-kinase (325 aa).

51-58 (VVGGAGKT) contributes to the ATP binding site.

The protein belongs to the LpxK family.

It catalyses the reaction a lipid A disaccharide + ATP = a lipid IVA + ADP + H(+). It participates in glycolipid biosynthesis; lipid IV(A) biosynthesis; lipid IV(A) from (3R)-3-hydroxytetradecanoyl-[acyl-carrier-protein] and UDP-N-acetyl-alpha-D-glucosamine: step 6/6. Functionally, transfers the gamma-phosphate of ATP to the 4'-position of a tetraacyldisaccharide 1-phosphate intermediate (termed DS-1-P) to form tetraacyldisaccharide 1,4'-bis-phosphate (lipid IVA). The protein is Tetraacyldisaccharide 4'-kinase of Paramagnetospirillum magneticum (strain ATCC 700264 / AMB-1) (Magnetospirillum magneticum).